Here is a 366-residue protein sequence, read N- to C-terminus: Palmitoyltransferase ZDHHC2 (366 aa).

At 1 to 15 (MAPSGPGGVRRRCRR) the chain is on the cytoplasmic side. The chain crosses the membrane as a helical span at residues 16 to 36 (VLYWIPVVFISLLLGWSYYAY). At 37–47 (AIQLCIVSMEN) the chain is on the lumenal side. A helical membrane pass occupies residues 48-68 (IGEQVVCLMAYHLLFAMFVWS). Residues 69 to 169 (YWKTIFTLPM…NNCVGFSNYK (101 aa)) are Cytoplasmic-facing. The DHHC domain occupies 126 to 176 (RYCDRCRLIKPDRCHHCSVCDKCILKMDHHCPWVNNCVGFSNYKFFLLFLA). Catalysis depends on Cys-156, which acts as the S-palmitoyl cysteine intermediate. A helical transmembrane segment spans residues 170-190 (FFLLFLAYSLLYCLFIAATDL). Residues 191–207 (QYFIRFWTNGLPDTQAK) are Lumenal-facing. Residues 208 to 228 (FHIMFLFFAAAMFSVSLSSLF) form a helical membrane-spanning segment. The Cytoplasmic segment spans residues 229–366 (GYHCWLVSKN…NPALTMENET (138 aa)). 2 stretches are compositionally biased toward polar residues: residues 297–316 (VNQDPEQPSTPAGLNSTAKN) and 332–349 (SHLLTDSQTWTENSSNSG). Positions 297 to 366 (VNQDPEQPST…NPALTMENET (70 aa)) are disordered. A mediates localization to plasma membrane and recycling endosomes region spans residues 298 to 366 (NQDPEQPSTP…NPALTMENET (69 aa)). The Non-canonical dileucine endocytic signal signature appears at 334-335 (LL). The short motif at 357–360 (NPAL) is the NPxY-like endocytic signal element.

It belongs to the DHHC palmitoyltransferase family. In terms of assembly, monomer. Homodimer. The monomeric form has a higher catalytic activity. Autopalmitoylated.

It is found in the postsynaptic density. The protein resides in the postsynaptic recycling endosome membrane. It localises to the cell membrane. The protein localises to the endoplasmic reticulum membrane. Its subcellular location is the golgi apparatus membrane. The enzyme catalyses L-cysteinyl-[protein] + hexadecanoyl-CoA = S-hexadecanoyl-L-cysteinyl-[protein] + CoA. It catalyses the reaction L-cysteinyl-[protein] + tetradecanoyl-CoA = S-tetradecanoyl-L-cysteinyl-[protein] + CoA. The catalysed reaction is L-cysteinyl-[protein] + octadecanoyl-CoA = S-octadecanoyl-L-cysteinyl-[protein] + CoA. Functionally, palmitoyltransferase that catalyzes the addition of palmitate onto various protein substrates and is involved in a variety of cellular processes. Has no stringent fatty acid selectivity and in addition to palmitate can also transfer onto target proteins myristate from tetradecanoyl-CoA and stearate from octadecanoyl-CoA. In the nervous system, plays a role in long term synaptic potentiation by palmitoylating AKAP5 through which it regulates protein trafficking from the dendritic recycling endosomes to the plasma membrane and controls both structural and functional plasticity at excitatory synapses. In dendrites, mediates the palmitoylation of DLG4 when synaptic activity decreases and induces synaptic clustering of DLG4 and associated AMPA-type glutamate receptors. Also mediates the de novo and turnover palmitoylation of RGS7BP, a shuttle for Gi/o-specific GTPase-activating proteins/GAPs, promoting its localization to the plasma membrane in response to the activation of G protein-coupled receptors. Through the localization of these GTPase-activating proteins/GAPs, it also probably plays a role in G protein-coupled receptors signaling in neurons. Also probably plays a role in cell adhesion by palmitoylating CD9 and CD151 to regulate their expression and function. Palmitoylates the endoplasmic reticulum protein CKAP4 and regulates its localization to the plasma membrane. Could also palmitoylate LCK and regulate its localization to the plasma membrane. This Rattus norvegicus (Rat) protein is Palmitoyltransferase ZDHHC2.